The following is a 298-amino-acid chain: Probable endonuclease 4 (298 aa).

Residues His-69, His-111, Glu-146, Asp-180, His-183, His-215, Asp-228, His-230, and Glu-260 each coordinate Zn(2+).

This sequence belongs to the AP endonuclease 2 family. Zn(2+) serves as cofactor.

It catalyses the reaction Endonucleolytic cleavage to 5'-phosphooligonucleotide end-products.. Its function is as follows. Endonuclease IV plays a role in DNA repair. It cleaves phosphodiester bonds at apurinic or apyrimidinic (AP) sites, generating a 3'-hydroxyl group and a 5'-terminal sugar phosphate. This is Probable endonuclease 4 from Bacillus anthracis (strain A0248).